Reading from the N-terminus, the 162-residue chain is Beta-lactoglobulin-1 (162 aa).

Intrachain disulfides connect Cys66/Cys160 and Cys106/Cys119.

It belongs to the calycin superfamily. Lipocalin family. As to quaternary structure, monomer.

It is found in the secreted. Lactoglobulin is the primary component of whey, it binds retinol and is probably involved in the transport of that molecule. This Felis catus (Cat) protein is Beta-lactoglobulin-1 (LGB1).